We begin with the raw amino-acid sequence, 326 residues long: Metal-binding protein YtgA (326 aa).

A signal peptide spans 1-21 (MSFFHTRKYKLILRGLLCLAG). 4 residues coordinate Fe(2+): His75, His141, His207, and Asp299.

This sequence belongs to the bacterial solute-binding protein 9 family. As to quaternary structure, monomer.

The protein resides in the periplasm. Functionally, part of the ATP-binding cassette (ABC) transport system YtgABCD involved in metal import. Binds Fe(2+), Mn(2+) and Ni(2+), with a preference for Fe(2+) and delivers them to the membrane permease for translocation into the cytoplasm. The protein is Metal-binding protein YtgA of Chlamydia trachomatis serovar D (strain ATCC VR-885 / DSM 19411 / UW-3/Cx).